A 434-amino-acid polypeptide reads, in one-letter code: MPAMSADALRAPSYNVSHLLNAVQSEMNRGSEKGDPSEEGLKVRLDDVELWKKFHKLTNEMIVTKSGRRMFPVLSASIAGLDPNSMYSVLLDFSAADDHRWKYVNGEWIPGGKPDGSPPTTAYIHPDSPNFGAHWMKQAVNFSKVKLSNKLNGSGQVMLNSLHKYEPRIHIIRVGGREKQRLVGSYSFTETRFIAVTAYQNEDITQLKIKYNPFAKAFLDIKDKNDGHDLFDDVHDFQGSKYPQFGGWFLPGSGAFGPTPHQFNPSIGLPSHAGCDRYGGLRSHRTSPYPPPPYHQKYSAAGAGYGAEASAGLSSSISLLAADSWSSLANSTSAASSMPACSQYGSMWPSTAATSGFSHVSSPQSPLPTGLFRNPHPTSSHQHNLASTAHGMAPVASGLPSAAVTTANSSEAHALSQSVMAPGECRASDNAGYL.

Positions 50-220 (LWKKFHKLTN…YNPFAKAFLD (171 aa)) form a DNA-binding region, T-box. Composition is skewed to polar residues over residues 355–364 (SGFSHVSSPQ) and 376–385 (HPTSSHQHNL). The interval 355–385 (SGFSHVSSPQSPLPTGLFRNPHPTSSHQHNL) is disordered.

As to expression, in the developing embryo, expressed in the mesenchyme founder cells, vegetal plate of the mesenchyme blastula, extending tip of the invaginating archenteron and, later, in the secondary mesenchyme cells.

Its subcellular location is the nucleus. In terms of biological role, involved in the transcriptional regulation of genes required for mesoderm differentiation. The protein is T-box transcription factor T homolog of Hemicentrotus pulcherrimus (Sea urchin).